The primary structure comprises 222 residues: Nucleoside triphosphate pyrophosphatase (222 aa).

D82 (proton acceptor) is an active-site residue.

The protein belongs to the Maf family. A divalent metal cation is required as a cofactor.

The protein localises to the cytoplasm. It carries out the reaction a ribonucleoside 5'-triphosphate + H2O = a ribonucleoside 5'-phosphate + diphosphate + H(+). The enzyme catalyses a 2'-deoxyribonucleoside 5'-triphosphate + H2O = a 2'-deoxyribonucleoside 5'-phosphate + diphosphate + H(+). Its function is as follows. Nucleoside triphosphate pyrophosphatase. May have a dual role in cell division arrest and in preventing the incorporation of modified nucleotides into cellular nucleic acids. The polypeptide is Nucleoside triphosphate pyrophosphatase (Mycobacterium tuberculosis (strain ATCC 25177 / H37Ra)).